The following is a 471-amino-acid chain: Probable nucleoredoxin 3 (471 aa).

Thioredoxin domains follow at residues 15-173 (VSIP…ARRQ) and 179-334 (QLLG…KERD).

The protein belongs to the nucleoredoxin family.

The catalysed reaction is [protein]-dithiol + NAD(+) = [protein]-disulfide + NADH + H(+). It catalyses the reaction [protein]-dithiol + NADP(+) = [protein]-disulfide + NADPH + H(+). Its function is as follows. Probable thiol-disulfide oxidoreductase that may participate in various redox reactions. This is Probable nucleoredoxin 3 from Oryza sativa subsp. japonica (Rice).